Consider the following 396-residue polypeptide: Elongation factor Tu (396 aa).

One can recognise a tr-type G domain in the interval 10-205; the sequence is KTHANIGTIG…AVDEYIPTPE (196 aa). The G1 stretch occupies residues 19-26; the sequence is GHVDHGKT. Residue 19 to 26 participates in GTP binding; that stretch reads GHVDHGKT. T26 is a Mg(2+) binding site. The tract at residues 61–65 is G2; it reads GITIS. A G3 region spans residues 82-85; sequence DCPG. GTP contacts are provided by residues 82–86 and 137–140; these read DCPGH and NKCD. The interval 137–140 is G4; the sequence is NKCD. The interval 175–177 is G5; that stretch reads SAL.

Belongs to the TRAFAC class translation factor GTPase superfamily. Classic translation factor GTPase family. EF-Tu/EF-1A subfamily. As to quaternary structure, monomer.

It localises to the cytoplasm. It catalyses the reaction GTP + H2O = GDP + phosphate + H(+). GTP hydrolase that promotes the GTP-dependent binding of aminoacyl-tRNA to the A-site of ribosomes during protein biosynthesis. The sequence is that of Elongation factor Tu from Shouchella clausii (strain KSM-K16) (Alkalihalobacillus clausii).